Consider the following 827-residue polypeptide: Periplasmic nitrate reductase (827 aa).

Positions 1–32 (MNLSRRDFMKANAALAAASVAGLIIPVKNVNA) form a signal peptide, tat-type signal. The 57-residue stretch at 37-93 (ITWDKAVCRFCGTGCAVLVGTKDGRVVASQGDPDAEVNRGLNCIKGYFLPKIMYGKD) folds into the 4Fe-4S Mo/W bis-MGD-type domain. Cys44, Cys47, Cys51, and Cys79 together coordinate [4Fe-4S] cluster. Mo-bis(molybdopterin guanine dinucleotide) is bound by residues Lys81, Gln148, Asn173, Cys177, 210–217 (WGSNMAEM), 242–246 (STFEH), 261–263 (QSD), Met372, Gln376, Asn482, 508–509 (SD), Lys531, Asp558, and 717–726 (TGRILEHWHT). Substrate is bound at residue Phe793. Mo-bis(molybdopterin guanine dinucleotide) contacts are provided by Asn801 and Lys818.

This sequence belongs to the prokaryotic molybdopterin-containing oxidoreductase family. NasA/NapA/NarB subfamily. Component of the periplasmic nitrate reductase NapAB complex composed of NapA and NapB. Requires [4Fe-4S] cluster as cofactor. Mo-bis(molybdopterin guanine dinucleotide) is required as a cofactor. Post-translationally, predicted to be exported by the Tat system. The position of the signal peptide cleavage has not been experimentally proven.

The protein resides in the periplasm. It carries out the reaction 2 Fe(II)-[cytochrome] + nitrate + 2 H(+) = 2 Fe(III)-[cytochrome] + nitrite + H2O. Catalytic subunit of the periplasmic nitrate reductase complex NapAB. Receives electrons from NapB and catalyzes the reduction of nitrate to nitrite. This Histophilus somni (strain 2336) (Haemophilus somnus) protein is Periplasmic nitrate reductase.